Consider the following 1187-residue polypeptide: uncharacterized protein (1187 aa).

Residues Lys38–Gln57 show a composition bias toward polar residues. 8 disordered regions span residues Lys38–Thr127, Ile189–Asn215, Thr248–Gln287, Asn358–Ser415, Phe443–Asn490, Gln536–Asn689, Ser752–Ile840, and His1079–Lys1187. Low complexity-rich tracts occupy residues Lys71–Ile84, Pro104–Asn124, Ser190–Asn215, and Thr248–His274. A compositionally biased stretch (polar residues) spans Phe443 to His455. Low complexity-rich tracts occupy residues Asn458–Asn490, Thr543–Ala570, Ile585–Asn653, Pro662–Asn689, Ser752–Asn790, and Asn797–Asn809. Residues Asn815–Asp832 show a composition bias toward acidic residues. Composition is skewed to low complexity over residues His1079 to Asn1149 and Lys1156 to Asn1174.

This is an uncharacterized protein from Dictyostelium discoideum (Social amoeba).